The following is a 636-amino-acid chain: Chaperone protein HtpG (636 aa).

Residues 1-345 (MSESATANAN…SSDLPLNVSR (345 aa)) form an a; substrate-binding region. Positions 346-562 (EILQQSKDID…EHDPSGNLAR (217 aa)) are b. Residues 563-636 (LMKAAGQPMP…NDLMMALSAK (74 aa)) are c.

It belongs to the heat shock protein 90 family. Homodimer.

It localises to the cytoplasm. Functionally, molecular chaperone. Has ATPase activity. This is Chaperone protein HtpG from Dechloromonas aromatica (strain RCB).